The chain runs to 734 residues: Photosystem I P700 chlorophyll a apoprotein A2 (734 aa).

The next 8 membrane-spanning stretches (helical) occupy residues 46-69 (IFAS…FHVA), 135-158 (LYTG…LHLQ), 175-199 (LNHH…HVAI), 273-291 (IAHH…GHMY), 330-353 (IHFQ…QHMY), 369-395 (AALY…IFFI), 417-439 (AIIS…LYVH), and 517-535 (FLVH…LILV). Residues C559 and C568 each contribute to the [4Fe-4S] cluster site. A run of 2 helical transmembrane segments spans residues 575–596 (AFYL…YWHW) and 643–665 (LSVW…MFLI). Residues H654, M662, and Y670 each contribute to the chlorophyll a site. W671 serves as a coordination point for phylloquinone. Residues 707–727 (LVGLAHFSVGYIFTYAAFLIA) form a helical membrane-spanning segment.

This sequence belongs to the PsaA/PsaB family. The PsaA/B heterodimer binds the P700 chlorophyll special pair and subsequent electron acceptors. PSI consists of a core antenna complex that captures photons, and an electron transfer chain that converts photonic excitation into a charge separation. The eukaryotic PSI reaction center is composed of at least 11 subunits. It depends on P700 is a chlorophyll a/chlorophyll a' dimer, A0 is one or more chlorophyll a, A1 is one or both phylloquinones and FX is a shared 4Fe-4S iron-sulfur center. as a cofactor.

Its subcellular location is the plastid. The protein localises to the chloroplast thylakoid membrane. It catalyses the reaction reduced [plastocyanin] + hnu + oxidized [2Fe-2S]-[ferredoxin] = oxidized [plastocyanin] + reduced [2Fe-2S]-[ferredoxin]. Functionally, psaA and PsaB bind P700, the primary electron donor of photosystem I (PSI), as well as the electron acceptors A0, A1 and FX. PSI is a plastocyanin-ferredoxin oxidoreductase, converting photonic excitation into a charge separation, which transfers an electron from the donor P700 chlorophyll pair to the spectroscopically characterized acceptors A0, A1, FX, FA and FB in turn. Oxidized P700 is reduced on the lumenal side of the thylakoid membrane by plastocyanin. In Oryza sativa (Rice), this protein is Photosystem I P700 chlorophyll a apoprotein A2.